The primary structure comprises 525 residues: GMP synthase [glutamine-hydrolyzing] (525 aa).

Positions 13 to 202 (TILVLDFGSQ…AVEICQAAQT (190 aa)) constitute a Glutamine amidotransferase type-1 domain. Residue cysteine 89 is the Nucleophile of the active site. Active-site residues include histidine 176 and glutamate 178. Residues 203–400 (WTMENFIDTE…LGISHELVWR (198 aa)) form the GMPS ATP-PPase domain. 231 to 237 (SGGVDST) is an ATP binding site. Residues arginine 304, aspartate 462, lysine 517, and glutamate 523 each coordinate XMP.

As to quaternary structure, homodimer. Mg(2+) serves as cofactor.

It is found in the cytoplasm. Its subcellular location is the cytosol. The catalysed reaction is XMP + L-glutamine + ATP + H2O = GMP + L-glutamate + AMP + diphosphate + 2 H(+). Its pathway is purine metabolism; GMP biosynthesis; GMP from XMP (L-Gln route): step 1/1. Functionally, catalyzes the conversion of xanthine monophosphate (XMP) to GMP in the presence of glutamine and ATP through an adenyl-XMP intermediate. The chain is GMP synthase [glutamine-hydrolyzing] (GUA1) from Eremothecium gossypii (strain ATCC 10895 / CBS 109.51 / FGSC 9923 / NRRL Y-1056) (Yeast).